A 464-amino-acid polypeptide reads, in one-letter code: MNEYDIKDTIAALSTPYSKSALAIIRMSGSKALEIASKICFYANNENKNINNFEHRKSYYALIKDENNIPVDEVIVLSSLSPNTFTSEDTIEFISHGSIVVIDALMNLLIKNGARAANRGEFTYRAYINGRIGISEAEAIHDLIDSNNKLMAEASIYKMRGRLTREIDKLRENIKNSLMLVYGELDFPEDETESFSYDKLIENFEIIKKDIENILSNSKRVENLINGIKVAILGRVNAGKSSIFNMILDRERAIVSNIAGTTRDFLSENIYIENIPFYLMDTAGFHKKADNDIELEGIERAKKCAYESDIILAVFDGSDIANEDDINLIEFLNALENKNIIYILNKSDEDKKFNKEIDNANIINISTKTKDGKDKLISALKDYVSDSDMDIFNKETYVNNRERCYLENGLKQIDICIKKSLESYSLDEVAEEMNILNNILGNVSGKVDAEEVINEIFANFCIGK.

(6S)-5-formyl-5,6,7,8-tetrahydrofolate-binding residues include arginine 26, glutamate 92, and arginine 131. Residues glycine 227–serine 385 enclose the TrmE-type G domain. Position 237 (asparagine 237) interacts with K(+). GTP-binding positions include asparagine 237–serine 242, serine 256–threonine 262, and aspartate 281–glycine 284. Serine 241 lines the Mg(2+) pocket. Residues serine 256, isoleucine 258, and threonine 261 each coordinate K(+). Threonine 262 contributes to the Mg(2+) binding site. Lysine 464 lines the (6S)-5-formyl-5,6,7,8-tetrahydrofolate pocket.

This sequence belongs to the TRAFAC class TrmE-Era-EngA-EngB-Septin-like GTPase superfamily. TrmE GTPase family. As to quaternary structure, homodimer. Heterotetramer of two MnmE and two MnmG subunits. K(+) serves as cofactor.

It localises to the cytoplasm. In terms of biological role, exhibits a very high intrinsic GTPase hydrolysis rate. Involved in the addition of a carboxymethylaminomethyl (cmnm) group at the wobble position (U34) of certain tRNAs, forming tRNA-cmnm(5)s(2)U34. This chain is tRNA modification GTPase MnmE, found in Brachyspira hyodysenteriae (strain ATCC 49526 / WA1).